A 374-amino-acid chain; its full sequence is 3-dehydroquinate synthase (374 aa).

This sequence belongs to the archaeal-type DHQ synthase family.

It catalyses the reaction 2-amino-2,3,7-trideoxy-D-lyxo-hept-6-ulosonate + NAD(+) + H2O = 3-dehydroquinate + NH4(+) + NADH + H(+). Its function is as follows. Catalyzes the oxidative deamination and cyclization of 2-amino-3,7-dideoxy-D-threo-hept-6-ulosonic acid (ADH) to yield 3-dehydroquinate (DHQ), which is fed into the canonical shikimic pathway of aromatic amino acid biosynthesis. In Methanothermobacter thermautotrophicus (strain ATCC 29096 / DSM 1053 / JCM 10044 / NBRC 100330 / Delta H) (Methanobacterium thermoautotrophicum), this protein is 3-dehydroquinate synthase.